A 282-amino-acid chain; its full sequence is Deoxyribonuclease-1 (282 aa).

A signal peptide spans 1–20 (MARLVLELLAAALLLRVAAT). N38 carries an N-linked (GlcNAc...) asparagine glycan. E98 is a catalytic residue. C121 and C124 are joined by a disulfide. H154 is a catalytic residue. C193 and C229 form a disulfide bridge.

Belongs to the DNase I family. Ca(2+) serves as cofactor. It depends on Mg(2+) as a cofactor. Post-translationally, N-glycosylated.

Its subcellular location is the secreted. The protein resides in the zymogen granule. It localises to the nucleus envelope. It carries out the reaction Endonucleolytic cleavage to 5'-phosphodinucleotide and 5'-phosphooligonucleotide end-products.. In terms of biological role, serum endocuclease secreted into body fluids by a wide variety of exocrine and endocrine organs. Expressed by non-hematopoietic tissues and preferentially cleaves protein-free DNA. Among other functions, seems to be involved in cell death by apoptosis. Binds specifically to G-actin and blocks actin polymerization. In Gallus gallus (Chicken), this protein is Deoxyribonuclease-1 (DNASE1).